The sequence spans 274 residues: Glucosamine-6-phosphate deaminase (274 aa).

Catalysis depends on Asp-72, which acts as the Proton acceptor; for enolization step. Residue Asp-141 is the For ring-opening step of the active site. The active-site Proton acceptor; for ring-opening step is the His-143. Glu-148 serves as the catalytic For ring-opening step.

This sequence belongs to the glucosamine/galactosamine-6-phosphate isomerase family. As to quaternary structure, homohexamer.

It localises to the cytoplasm. The enzyme catalyses alpha-D-glucosamine 6-phosphate + H2O = beta-D-fructose 6-phosphate + NH4(+). The protein operates within nucleotide-sugar biosynthesis; UDP-N-acetyl-alpha-D-glucosamine biosynthesis; alpha-D-glucosamine 6-phosphate from D-fructose 6-phosphate: step 1/1. Its function is as follows. Catalyzes the reversible conversion of alpha-D-glucosamine 6-phosphate (GlcN-6P) into beta-D-fructose 6-phosphate (Fru-6P) and ammonium ion, a regulatory reaction step in de novo uridine diphosphate-N-acetyl-alpha-D-glucosamine (UDP-GlcNAc) biosynthesis via hexosamine pathway. This Drosophila pseudoobscura pseudoobscura (Fruit fly) protein is Glucosamine-6-phosphate deaminase.